The chain runs to 122 residues: Urease subunit beta (122 aa).

The disordered stretch occupies residues aspartate 102 to glutamine 122.

The protein belongs to the urease beta subunit family. Heterotrimer of UreA (gamma), UreB (beta) and UreC (alpha) subunits. Three heterotrimers associate to form the active enzyme.

It is found in the cytoplasm. It carries out the reaction urea + 2 H2O + H(+) = hydrogencarbonate + 2 NH4(+). It participates in nitrogen metabolism; urea degradation; CO(2) and NH(3) from urea (urease route): step 1/1. This chain is Urease subunit beta, found in Paenarthrobacter aurescens (strain TC1).